Consider the following 1238-residue polypeptide: Chitin synthase 4 (1238 aa).

Disordered stretches follow at residues 1–93 (MAEP…PERN) and 132–190 (TVSS…RRQK). The segment covering 14 to 34 (TRDKSHSPYRESPSRRLRDVE) has biased composition (basic and acidic residues). Asn-50 carries N-linked (GlcNAc...) asparagine glycosylation. Polar residues-rich tracts occupy residues 71–80 (SNPNPMSQSD) and 133–142 (VSSGSTQQDT). Residues 175–190 (RKDTRNLTEEEKRRQK) show a composition bias toward basic and acidic residues. Residue Asn-180 is glycosylated (N-linked (GlcNAc...) asparagine). 2 helical membrane passes run 200–220 (IWNI…LQCF) and 235–255 (VGLI…TFGF). N-linked (GlcNAc...) asparagine glycosylation is found at Asn-365, Asn-404, and Asn-426. Residues 487-507 (VVLYVSLVFILAIVAAKFFLA) traverse the membrane as a helical segment. Disordered stretches follow at residues 548 to 570 (PKIT…RGSM) and 582 to 606 (YAVD…AKLL). Residues 553 to 562 (PASTVTGSDG) are compositionally biased toward polar residues. Residues Asn-617, Asn-903, and Asn-1030 are each glycosylated (N-linked (GlcNAc...) asparagine). A run of 3 helical transmembrane segments spans residues 1062–1082 (IGTL…ILSI), 1087–1107 (VPVI…ILIV), and 1115–1135 (YILW…VLPA).

The protein belongs to the chitin synthase family. Class IV subfamily. Post-translationally, maximal activity requires trypsin activation, suggesting a zymogenic nature.

Its subcellular location is the cell membrane. It catalyses the reaction [(1-&gt;4)-N-acetyl-beta-D-glucosaminyl](n) + UDP-N-acetyl-alpha-D-glucosamine = [(1-&gt;4)-N-acetyl-beta-D-glucosaminyl](n+1) + UDP + H(+). Its activity is regulated as follows. Activity is stimulated by Mg(2+), and is more inhibited by polyoxin D than by nikkomycin. Its function is as follows. Polymerizes chitin, a structural polymer of the cell wall and septum, by transferring the sugar moiety of UDP-GlcNAc to the non-reducing end of the growing chitin polymer. CHS4 synthesizes a large amount of chitin and appears to play a role in the process of cell separation. CHS4 is particularly well suited for functioning at the higher temperatures associated with its poorly characterized saprophic environment and with human infection. In Exophiala dermatitidis (Black yeast-like fungus), this protein is Chitin synthase 4.